We begin with the raw amino-acid sequence, 595 residues long: Solute carrier family 13 member 1 (595 aa).

Helical transmembrane passes span 13-33 (FLLV…IRSK), 40-60 (ILFV…ITAL), 77-97 (VASA…CLAT), 113-133 (VMMV…STAF), and 134-154 (LSMW…VEAV). N-linked (GlcNAc...) asparagine glycosylation is present at Asn-174. Residues 190 to 218 (QETNERKEKTKPALGSSNDKGKVSSKMET) are disordered. Residues 208–218 (DKGKVSSKMET) are compositionally biased toward basic and acidic residues. 8 consecutive transmembrane segments (helical) span residues 239 to 259 (LMCL…ITGT), 283 to 303 (SWFL…WIWL), 348 to 368 (IVTL…DPGF), 381 to 401 (GYVT…LIPA), 464 to 484 (PLGS…VTSL), 491 to 511 (PATI…IHVN), 512 to 532 (PLHI…LPVA), and 553 to 573 (AGLG…FTWI). N-linked (GlcNAc...) asparagine glycosylation occurs at Asn-591.

This sequence belongs to the SLC13A/DASS transporter (TC 2.A.47) family. NADC subfamily. As to expression, kidney and intestine.

Its subcellular location is the apical cell membrane. It carries out the reaction sulfate(out) + 3 Na(+)(out) = sulfate(in) + 3 Na(+)(in). It catalyses the reaction selenate(out) + 3 Na(+)(out) = selenate(in) + 3 Na(+)(in). The catalysed reaction is thiosulfate(out) + 3 Na(+)(out) = thiosulfate(in) + 3 Na(+)(in). Sodium:sulfate symporter that mediates sulfate reabsorption in the kidney and small intestine. Can also mediate the transport of selenate and thiosulfate. This Rattus norvegicus (Rat) protein is Solute carrier family 13 member 1 (Slc13a1).